The sequence spans 472 residues: MKFLIFAFFGGVHLLSLCSGKAIYKNGISKRTFEEIKEEIASYGDVAKAIINLAVYGKAQNRSYERLALLVDTVGPRLSGSKNLEKAIQIMYQNLQQDELENVHLEPGRIPHWERGEESAVMLEPRIHKIAILGLGSSIGTPPEGITAEVLVVTSFDELQRRASEARGKIVVYNQPYINYSRTVQYRTQGAVEAAKVGALASLIRSVASFSIYSPHTGIQEYQDGVPRIPTACITVEDAEMMSRMASRGIRIVIQLKMGAKTYPDTDSFNTVAEITGSKYPEQVVLVSGHLDSWDVGQGAMDDGGGAFISWEALSLIKDLGLRPKRTLRLVLWTAEEQGGVGAFQYYQLHKVNISNYSLVMESDTGTFLPTGLQFTGSEKARAVMEEVMSLLQPLNVTQVLSHGEGTDINFWIKAGVPGASLLDDLYKYFFFHHSHGDTMTVMDPKQMNVAAAVWAVVSYVVADMEEMLPRS.

A signal peptide spans 1–20 (MKFLIFAFFGGVHLLSLCSG). Residues 21–44 (KAIYKNGISKRTFEEIKEEIASYG) constitute a propeptide that is removed on maturation. Asparagine 61 and asparagine 179 each carry an N-linked (GlcNAc...) asparagine glycan. 2 residues coordinate Zn(2+): histidine 290 and aspartate 302. Glutamate 336 (nucleophile) is an active-site residue. Glutamate 337 lines the Zn(2+) pocket. N-linked (GlcNAc...) asparagine glycans are attached at residues asparagine 353 and asparagine 356. Zn(2+) is bound at residue aspartate 364. N-linked (GlcNAc...) asparagine glycosylation occurs at asparagine 396. Position 434 (histidine 434) interacts with Zn(2+).

Belongs to the peptidase M28 family. Homodimer. The monomeric form is inactive while the homodimer is active. Post-translationally, N-glycosylated. The secreted form is modified by hybrid or complex type oligosaccharide chains.

It is found in the endoplasmic reticulum. The protein resides in the golgi apparatus. The protein localises to the lysosome. Its subcellular location is the secreted. In terms of biological role, carboxypeptidase that may play an important role in the hydrolysis of circulating peptides. Catalyzes the hydrolysis of dipeptides with unsubstituted terminals into amino acids. May play a role in the liberation of thyroxine hormone from its thyroglobulin (Tg) precursor. The protein is Carboxypeptidase Q (CPQ) of Pongo abelii (Sumatran orangutan).